A 95-amino-acid polypeptide reads, in one-letter code: Large ribosomal subunit protein bL21 (95 aa).

Belongs to the bacterial ribosomal protein bL21 family. In terms of assembly, part of the 50S ribosomal subunit. Contacts protein L20.

Functionally, this protein binds to 23S rRNA in the presence of protein L20. This is Large ribosomal subunit protein bL21 from Prosthecochloris vibrioformis (Chlorobium vibrioforme).